Consider the following 538-residue polypeptide: Putative outer membrane porin BglH (538 aa).

A signal peptide spans 1–25; that stretch reads MFRRNIITSAILLMAPLAFSAQSLA.

Belongs to the porin LamB (TC 1.B.3) family.

It is found in the cell outer membrane. Its function is as follows. May be a sugar porin with a broad carbohydrate specificity. In Escherichia coli O6:K15:H31 (strain 536 / UPEC), this protein is Putative outer membrane porin BglH (bglH).